The sequence spans 508 residues: Photosystem II CP47 reaction center protein (508 aa).

A run of 6 helical transmembrane segments spans residues 21 to 36 (SVHIMHTALVAGWAGS), 101 to 115 (IVFSGLCFLAAIWHW), 140 to 156 (GIHLFLSGVACFGFGAF), 203 to 218 (IAAGTLGILAGLFHLS), 237 to 252 (VLSSSIAAVFFAAFVV), and 457 to 472 (SFALLFFFGHIWHGAR).

Belongs to the PsbB/PsbC family. PsbB subfamily. As to quaternary structure, PSII is composed of 1 copy each of membrane proteins PsbA, PsbB, PsbC, PsbD, PsbE, PsbF, PsbH, PsbI, PsbJ, PsbK, PsbL, PsbM, PsbT, PsbX, PsbY, PsbZ, Psb30/Ycf12, at least 3 peripheral proteins of the oxygen-evolving complex and a large number of cofactors. It forms dimeric complexes. It depends on Binds multiple chlorophylls. PSII binds additional chlorophylls, carotenoids and specific lipids. as a cofactor.

It is found in the plastid. Its subcellular location is the chloroplast thylakoid membrane. Its function is as follows. One of the components of the core complex of photosystem II (PSII). It binds chlorophyll and helps catalyze the primary light-induced photochemical processes of PSII. PSII is a light-driven water:plastoquinone oxidoreductase, using light energy to abstract electrons from H(2)O, generating O(2) and a proton gradient subsequently used for ATP formation. The protein is Photosystem II CP47 reaction center protein of Barbarea verna (Land cress).